Reading from the N-terminus, the 224-residue chain is LexA repressor (224 aa).

Residues 31–51 (RAEIAAEFGFKSANAAEEHLQ) constitute a DNA-binding region (H-T-H motif). Residues serine 142 and lysine 179 each act as for autocatalytic cleavage activity in the active site.

The protein belongs to the peptidase S24 family. As to quaternary structure, homodimer.

It carries out the reaction Hydrolysis of Ala-|-Gly bond in repressor LexA.. Its function is as follows. Represses a number of genes involved in the response to DNA damage (SOS response), including recA and lexA. In the presence of single-stranded DNA, RecA interacts with LexA causing an autocatalytic cleavage which disrupts the DNA-binding part of LexA, leading to derepression of the SOS regulon and eventually DNA repair. The protein is LexA repressor of Paracidovorax citrulli (strain AAC00-1) (Acidovorax citrulli).